A 325-amino-acid polypeptide reads, in one-letter code: Probable 4-hydroxy-tetrahydrodipicolinate reductase 2, chloroplastic (325 aa).

The transit peptide at 1-32 directs the protein to the chloroplast; it reads MLSLRPPCTLSPAPWRRRRTLHGAAGTPQRVS. Residues 57-62, 149-151, and 172-175 contribute to the NAD(+) site; these read GCTGKM, GTT, and SPQM. His208 (proton donor/acceptor) is an active-site residue. Lys212 acts as the Proton donor in catalysis. 217–218 lines the (S)-2,3,4,5-tetrahydrodipicolinate pocket; sequence GT.

This sequence belongs to the DapB family.

The protein resides in the plastid. The protein localises to the chloroplast. The enzyme catalyses (S)-2,3,4,5-tetrahydrodipicolinate + NAD(+) + H2O = (2S,4S)-4-hydroxy-2,3,4,5-tetrahydrodipicolinate + NADH + H(+). It carries out the reaction (S)-2,3,4,5-tetrahydrodipicolinate + NADP(+) + H2O = (2S,4S)-4-hydroxy-2,3,4,5-tetrahydrodipicolinate + NADPH + H(+). It functions in the pathway amino-acid biosynthesis; L-lysine biosynthesis via DAP pathway; (S)-tetrahydrodipicolinate from L-aspartate: step 4/4. Its function is as follows. Catalyzes the conversion of 4-hydroxy-tetrahydrodipicolinate (HTPA) to tetrahydrodipicolinate. This chain is Probable 4-hydroxy-tetrahydrodipicolinate reductase 2, chloroplastic (DAPB2), found in Oryza sativa subsp. japonica (Rice).